Consider the following 69-residue polypeptide: Cecropin-like peptide 1 (69 aa).

The first 23 residues, M1 to A23, serve as a signal peptide directing secretion. Q68 bears the Glutamine amide mark.

As to expression, following bacterial infection, expressed in fat body, trachea and muscle.

It is found in the secreted. Antimicrobial peptide active against Gram-negative bacteria E.coli KCCM 11234 (MIC&lt;=1.03 uM), E.aerogenes KCCM 12177 (MIC&lt;=2.07 uM) and P.aeruginosa KCCM 11328 (MIC&lt;=2.07 uM). Not active against various Gram-positive bacteria at concentrations up to 4.14 uM. This Hermetia illucens (Black soldier fly) protein is Cecropin-like peptide 1.